We begin with the raw amino-acid sequence, 369 residues long: uncharacterized protein (369 aa).

This is an uncharacterized protein from Archaeoglobus fulgidus (strain ATCC 49558 / DSM 4304 / JCM 9628 / NBRC 100126 / VC-16).